A 96-amino-acid chain; its full sequence is Plasminogen-like protein B (96 aa).

A signal peptide spans 1 to 19; it reads MEHKEVVLLLLLFLKSGQG. The PAN domain maps to 20–96; it reads EPLDDYVNTQ…RMRDAVLFEK (77 aa). Intrachain disulfides connect C49–C73 and C53–C61.

The protein resides in the secreted. Its function is as follows. May bind noncovalently to lysine binding sites present in the kringle structures of plasminogen. This may interfere with the binding of fibrin or alpha-2-antiplasmin to plasminogen and may result in the localization of activity at sites necessary for extracellular matrix destruction. In Homo sapiens (Human), this protein is Plasminogen-like protein B (PLGLB1).